We begin with the raw amino-acid sequence, 435 residues long: Nucleoredoxin (435 aa).

S2 bears the N-acetylserine mark. One can recognise a Thioredoxin domain in the interval 167-321 (PKPFREVIAG…VLELSDSNAV (155 aa)).

It belongs to the nucleoredoxin family. As to quaternary structure, associates with the phosphatase 2A holoenzyme. Interacts with PPP2CA; the interaction is direct. Interacts with DVL1 (via PDZ domain); the interaction is direct and regulated by oxidative stress.

Its subcellular location is the cytoplasm. The protein resides in the cytosol. The protein localises to the nucleus. It catalyses the reaction [protein]-dithiol + NAD(+) = [protein]-disulfide + NADH + H(+). The catalysed reaction is [protein]-dithiol + NADP(+) = [protein]-disulfide + NADPH + H(+). Functions as a redox-dependent negative regulator of the Wnt signaling pathway, possibly by preventing ubiquitination of DVL3 by the BCR(KLHL12) complex. May also function as a transcriptional regulator act as a regulator of protein phosphatase 2A (PP2A). This chain is Nucleoredoxin (NXN), found in Bos taurus (Bovine).